Reading from the N-terminus, the 340-residue chain is Uroporphyrinogen decarboxylase (340 aa).

Substrate-binding positions include 21–25, D71, Y148, S203, and H316; that span reads RQAGR.

Belongs to the uroporphyrinogen decarboxylase family. In terms of assembly, homodimer.

Its subcellular location is the cytoplasm. It catalyses the reaction uroporphyrinogen III + 4 H(+) = coproporphyrinogen III + 4 CO2. It functions in the pathway porphyrin-containing compound metabolism; protoporphyrin-IX biosynthesis; coproporphyrinogen-III from 5-aminolevulinate: step 4/4. Catalyzes the decarboxylation of four acetate groups of uroporphyrinogen-III to yield coproporphyrinogen-III. The polypeptide is Uroporphyrinogen decarboxylase (Campylobacter concisus (strain 13826)).